Here is a 587-residue protein sequence, read N- to C-terminus: ATP-dependent zinc metalloprotease FtsH 2 (587 aa).

At 1-12 the chain is on the cytoplasmic side; that stretch reads MSSDRTREVTKR. The helical transmembrane segment at 13 to 33 threads the bilayer; it reads ILMVLFGLWLLQFFFLPPLTT. At 34–102 the chain is on the extracellular side; it reads RPTELSYSAF…EQRYEVTRTP (69 aa). The helical transmembrane segment at 103-123 threads the bilayer; it reads WWVTLLPTVLWLAVMVGLFAW. Over 124 to 587 the chain is Cytoplasmic; it reads AQKRQAGAFG…GDDVRRILSA (464 aa). Position 192–199 (192–199) interacts with ATP; it reads GPPGTGKT. His416 lines the Zn(2+) pocket. Residue Glu417 is part of the active site. 2 residues coordinate Zn(2+): His420 and Asp492.

In the central section; belongs to the AAA ATPase family. It in the C-terminal section; belongs to the peptidase M41 family. In terms of assembly, homohexamer. Zn(2+) serves as cofactor.

It is found in the cell membrane. In terms of biological role, acts as a processive, ATP-dependent zinc metallopeptidase for both cytoplasmic and membrane proteins. Plays a role in the quality control of integral membrane proteins. This is ATP-dependent zinc metalloprotease FtsH 2 from Symbiobacterium thermophilum (strain DSM 24528 / JCM 14929 / IAM 14863 / T).